The chain runs to 395 residues: Cyclic AMP-responsive element-binding protein 3-like protein 4 (395 aa).

Residues 1–295 (MDLGIPDLLD…QTSNKAAQTS (295 aa)) lie on the Cytoplasmic side of the membrane. A disordered region spans residues 82 to 108 (EASPGSDSGISEDPCHPDSPPAPRATS). In terms of domain architecture, bZIP spans 217–280 (VLKKVRRKIR…ISLVAQLRQL (64 aa)). The tract at residues 219 to 248 (KKVRRKIRNKQSAQDSRRRKKEYIDGLESR) is basic motif. Positions 259–280 (LQKKVQELERHNISLVAQLRQL) are leucine-zipper. Residues 296–316 (TCVLILLFSLALIILPSFSPF) form a helical; Signal-anchor for type II membrane protein membrane-spanning segment. The Lumenal portion of the chain corresponds to 317-395 (QSRPEAGSED…IRSVLHADEM (79 aa)). The segment at 355–395 (RLREPPGAKDANGSTRTLLEKMGGKPRPSGRIRSVLHADEM) is disordered. Asn366 carries N-linked (GlcNAc...) asparagine glycosylation.

The protein belongs to the bZIP family. ATF subfamily. In terms of assembly, binds DNA as a dimer. Post-translationally, N-glycosylated in the C-terminal region. Controlled by regulated intramembrane proteolysis (RIP). Following ER stress a fragment containing the cytoplasmic transcription factor domain is released by proteolysis. The cleavage seems to be performed sequentially by site-1 and site-2 proteases (PS1 and PS2). PS1 cleavage may be suppressed by a determinant in the C-terminal region. In terms of tissue distribution, according to PubMed:11830526, exclusively expressed in the prostate. Expressed in breast and prostate cancer cell lines. Expressed in prostatic luminal epithelial cells (at protein level). Expression is significantly more abundant in prostate cancer than in benign prostatic tissue (prostatic hyperplasia). According to PubMed:12111373, also expressed in brain, pancreas and skeletal muscle, and at lower levels in small intestine, testis, leukocyte and thymus.

The protein resides in the endoplasmic reticulum membrane. It localises to the golgi apparatus membrane. Its subcellular location is the nucleus. Its function is as follows. Transcriptional activator that may play a role in the unfolded protein response. Binds to the UPR element (UPRE) but not to CRE element. Preferentially binds DNA with to the consensus sequence 5'-T[GT]ACGT[GA][GT]-3' and has transcriptional activation activity from UPRE. Binds to NF-kappa-B site and has transcriptional activation activity from NF-kappa-B-containing regulatory elements. The protein is Cyclic AMP-responsive element-binding protein 3-like protein 4 (CREB3L4) of Homo sapiens (Human).